The chain runs to 616 residues: MPKYRSATTTHGRNMAGARALWRATGMTDADFGKPIIAVVNSFTQFVPGHVHLRDLGKLVAEQIEAAGGVAKEFNTIAVDDGIAMGHGGMLYSLPSRELIADSVEYMVNAHCADAMVCISNCDKITPGMLMASLRLNIPVIFVSGGPMEAGKTKLSDQIIKLDLVDAMIQGADPKVSDSQSDQVERSACPTCGSCSGMFTANSMNCLTEALGLSQPGNGSLLATHADRKQLFLNAGKRIVELTKRYYEQNDESALPRNIASKAAFENAMTLDIAMGGSTNTVLHLLAAAQEAEIDFTMSDIDKLSRKVPQLCKVAPSTQKYHMEDVHRAGGVIGILGELDRAGLLNRDVKNVLGLTLPQTLEQYDVMLTQDDAVKNMFRAGPAGIRTTQAFSQDCRWDSLDDDRANGCIRSLEHAYSKDGGLAVLYGNFAENGCIVKTAGVDDSILKFTGPAKVYESQDDAVEAILGGKVVAGDVVVIRYEGPKGGPGMQEMLYPTSFLKSMGLGKVCALITDGRFSGGTSGLSIGHVSPEAASGGSIGLIEDGDLIAIDIPNRGIQLQVSDAELAARREAQEARGDKAWTPKNRERQVSFALRAYASLATSADKGAVRDKSKLGG.

Mg(2+) is bound at residue Asp81. A [2Fe-2S] cluster-binding site is contributed by Cys122. 2 residues coordinate Mg(2+): Asp123 and Lys124. Lys124 is modified (N6-carboxylysine). Cys195 lines the [2Fe-2S] cluster pocket. Glu491 is a binding site for Mg(2+). The active-site Proton acceptor is Ser517.

It belongs to the IlvD/Edd family. Homodimer. [2Fe-2S] cluster is required as a cofactor. Mg(2+) serves as cofactor.

The catalysed reaction is (2R)-2,3-dihydroxy-3-methylbutanoate = 3-methyl-2-oxobutanoate + H2O. It carries out the reaction (2R,3R)-2,3-dihydroxy-3-methylpentanoate = (S)-3-methyl-2-oxopentanoate + H2O. Its pathway is amino-acid biosynthesis; L-isoleucine biosynthesis; L-isoleucine from 2-oxobutanoate: step 3/4. The protein operates within amino-acid biosynthesis; L-valine biosynthesis; L-valine from pyruvate: step 3/4. Its function is as follows. Functions in the biosynthesis of branched-chain amino acids. Catalyzes the dehydration of (2R,3R)-2,3-dihydroxy-3-methylpentanoate (2,3-dihydroxy-3-methylvalerate) into 2-oxo-3-methylpentanoate (2-oxo-3-methylvalerate) and of (2R)-2,3-dihydroxy-3-methylbutanoate (2,3-dihydroxyisovalerate) into 2-oxo-3-methylbutanoate (2-oxoisovalerate), the penultimate precursor to L-isoleucine and L-valine, respectively. This is Dihydroxy-acid dehydratase from Escherichia coli O17:K52:H18 (strain UMN026 / ExPEC).